Consider the following 178-residue polypeptide: Cytidylate kinase (178 aa).

ATP is bound at residue 7 to 15; sequence GLPGTGTTT.

This sequence belongs to the cytidylate kinase family. Type 2 subfamily.

It localises to the cytoplasm. It catalyses the reaction CMP + ATP = CDP + ADP. The catalysed reaction is dCMP + ATP = dCDP + ADP. This Methanococcus aeolicus (strain ATCC BAA-1280 / DSM 17508 / OCM 812 / Nankai-3) protein is Cytidylate kinase.